Reading from the N-terminus, the 368-residue chain is MGTPPGLQTDCEALLSRFQETDSVRFEDFTELWRNMKFGTIFCGRMRNLEKNMFTKEALALAWRYFLPPYTFQIRVGALYLLYGLYNTQLCQPKQKIRVALKDWDEVLKFQQDLVNAQHFDAAYIFRKLRLDRAFHFTAMPKLLSYRMKKKIHRAEVTEEFKDPSDRVMKLITSDVLEEMLNVHDHYQNMKHVISVDKSKPDKALSLIKDDFFDNIKNIVLEHQQWHKDRKNPSLKSKTNDGEEKMEGNSQETERCERAESLAKIKSKAFSVVIQASKSRRHRQVKLDSSDSDSASGQGQVKATRKKEKKERLKPAGRKMSLRNKGNVQNIHKEDKPLSLSMPVITEEEENESLSGTEFTASKKRRKH.

The SNAPC3-binding stretch occupies residues 1–168; it reads MGTPPGLQTD…EEFKDPSDRV (168 aa). The SNAPC4-binding stretch occupies residues 164–268; sequence PSDRVMKLIT…AESLAKIKSK (105 aa). 2 disordered regions span residues 224 to 257 and 275 to 368; these read QQWHKDRKNPSLKSKTNDGEEKMEGNSQETERCE and QASK…RRKH. Residues 238-257 show a composition bias toward basic and acidic residues; that stretch reads KTNDGEEKMEGNSQETERCE. Residues Ser-289 and Ser-290 each carry the phosphoserine modification.

Part of the SNAPc complex composed of 5 subunits: SNAPC1, SNAPC2, SNAPC3, SNAPC4 and SNAPC5. SNAPC1 interacts with SNAPC3, SNAPC4 and TBP.

The protein resides in the nucleus. Functionally, part of the SNAPc complex required for the transcription of both RNA polymerase II and III small-nuclear RNA genes. Binds to the proximal sequence element (PSE), a non-TATA-box basal promoter element common to these 2 types of genes. Recruits TBP and BRF2 to the U6 snRNA TATA box. This chain is snRNA-activating protein complex subunit 1 (SNAPC1), found in Homo sapiens (Human).